Here is a 321-residue protein sequence, read N- to C-terminus: MNIKSLLLGSAAALVAASGAQAADAIVAPEPEAVEYVRVCDAYGAGYFYIPGTETCLRVHGYVRYDVKGGDDVYSGTDRNGWDKGARFALMFNTNSETELGTLGTYTQLRFNYTSNNSRHDGQYGDFSDDRDVADGGVSTGKIAYTFTGGNGFSAVIALEQGGEDVDNDYTIDGYMPHVVGGLKYAGGWGSIAGVVAYDSVIEEWATKVRGDVNITDRFSVWLQGAYSSAATPNQNYGQWGGDWAVWGGAKFIAPEKATFNLQAAHDDWGKTAVTANVAYQLVPGFTITPEVSYTKFGGEWKDTVAEDNAWGGIVRFQRSF.

The N-terminal stretch at 1 to 22 is a signal peptide; the sequence is MNIKSLLLGSAAALVAASGAQA.

The protein belongs to the alphaproteobacteria porin family. In terms of assembly, monomer.

The protein localises to the cell outer membrane. Its function is as follows. Forms passive diffusion pores that allow small molecular weight hydrophilic materials across the outer membrane. The protein is Porin Omp2a (omp2a) of Brucella abortus (strain S19).